The chain runs to 553 residues: Dihydroxy-acid dehydratase (553 aa).

Residue aspartate 78 participates in Mg(2+) binding. Residue cysteine 119 participates in [2Fe-2S] cluster binding. Mg(2+) contacts are provided by aspartate 120 and lysine 121. The residue at position 121 (lysine 121) is an N6-carboxylysine. [2Fe-2S] cluster is bound at residue cysteine 191. Glutamate 442 is a binding site for Mg(2+). Serine 468 acts as the Proton acceptor in catalysis.

Belongs to the IlvD/Edd family. As to quaternary structure, homodimer. It depends on [2Fe-2S] cluster as a cofactor. Requires Mg(2+) as cofactor.

The catalysed reaction is (2R)-2,3-dihydroxy-3-methylbutanoate = 3-methyl-2-oxobutanoate + H2O. It carries out the reaction (2R,3R)-2,3-dihydroxy-3-methylpentanoate = (S)-3-methyl-2-oxopentanoate + H2O. Its pathway is amino-acid biosynthesis; L-isoleucine biosynthesis; L-isoleucine from 2-oxobutanoate: step 3/4. The protein operates within amino-acid biosynthesis; L-valine biosynthesis; L-valine from pyruvate: step 3/4. Functions in the biosynthesis of branched-chain amino acids. Catalyzes the dehydration of (2R,3R)-2,3-dihydroxy-3-methylpentanoate (2,3-dihydroxy-3-methylvalerate) into 2-oxo-3-methylpentanoate (2-oxo-3-methylvalerate) and of (2R)-2,3-dihydroxy-3-methylbutanoate (2,3-dihydroxyisovalerate) into 2-oxo-3-methylbutanoate (2-oxoisovalerate), the penultimate precursor to L-isoleucine and L-valine, respectively. In Carboxydothermus hydrogenoformans (strain ATCC BAA-161 / DSM 6008 / Z-2901), this protein is Dihydroxy-acid dehydratase.